Consider the following 946-residue polypeptide: Leucine--tRNA ligase (946 aa).

The short motif at 43-53 is the 'HIGH' region element; sequence PYPNGTIHIGH. A 'KMSKS' region motif is present at residues 638 to 642; that stretch reads KMSKS. Residue Lys641 coordinates ATP.

The protein belongs to the class-I aminoacyl-tRNA synthetase family.

The protein resides in the cytoplasm. The catalysed reaction is tRNA(Leu) + L-leucine + ATP = L-leucyl-tRNA(Leu) + AMP + diphosphate. This chain is Leucine--tRNA ligase, found in Pyrobaculum calidifontis (strain DSM 21063 / JCM 11548 / VA1).